Consider the following 302-residue polypeptide: Tritrans,polycis-undecaprenyl-diphosphate synthase (geranylgeranyl-diphosphate specific) (302 aa).

The active site involves Asp-33. A Mg(2+)-binding site is contributed by Asp-33. Residues Gly-34–Arg-37 and Ser-78–Glu-80 each bind substrate. Asn-81 functions as the Proton acceptor in the catalytic mechanism. Substrate contacts are provided by residues Phe-82, Arg-84, Arg-203, and Arg-209–Ser-211.

It belongs to the UPP synthase family. Homodimer. Mg(2+) serves as cofactor.

The catalysed reaction is geranylgeranyl diphosphate + 7 isopentenyl diphosphate = tri-trans,hepta-cis-undecaprenyl diphosphate + 7 diphosphate. In terms of biological role, catalyzes the sequential condensation of isopentenyl diphosphate (IPP) with geranylgeranyl diphosphate (GGPP) to yield (2Z,6Z,10Z,14Z,18Z,22Z,26Z,30E,34E,38E)-undecaprenyl diphosphate (tritrans,heptacis-UPP). It is probably the precursor of glycosyl carrier lipids. This Halobacterium salinarum (strain ATCC 700922 / JCM 11081 / NRC-1) (Halobacterium halobium) protein is Tritrans,polycis-undecaprenyl-diphosphate synthase (geranylgeranyl-diphosphate specific).